A 446-amino-acid polypeptide reads, in one-letter code: Probable glycine dehydrogenase (decarboxylating) subunit 1 (446 aa).

It belongs to the GcvP family. N-terminal subunit subfamily. The glycine cleavage system is composed of four proteins: P, T, L and H. In this organism, the P 'protein' is a heterodimer of two subunits.

The enzyme catalyses N(6)-[(R)-lipoyl]-L-lysyl-[glycine-cleavage complex H protein] + glycine + H(+) = N(6)-[(R)-S(8)-aminomethyldihydrolipoyl]-L-lysyl-[glycine-cleavage complex H protein] + CO2. In terms of biological role, the glycine cleavage system catalyzes the degradation of glycine. The P protein binds the alpha-amino group of glycine through its pyridoxal phosphate cofactor; CO(2) is released and the remaining methylamine moiety is then transferred to the lipoamide cofactor of the H protein. This chain is Probable glycine dehydrogenase (decarboxylating) subunit 1, found in Xanthobacter autotrophicus (strain ATCC BAA-1158 / Py2).